Here is a 389-residue protein sequence, read N- to C-terminus: S-adenosylmethionine synthase (389 aa).

His-17 lines the ATP pocket. Asp-19 is a Mg(2+) binding site. Glu-45 serves as a coordination point for K(+). The L-methionine site is built by Glu-58 and Gln-101. The interval 101-111 is flexible loop; it reads QSPDIAQGVTE. Residues 168 to 170, 234 to 235, Asp-243, 249 to 250, Ala-266, and Lys-270 contribute to the ATP site; these read DSK, RF, and RK. Asp-243 is a binding site for L-methionine. Lys-274 lines the L-methionine pocket.

It belongs to the AdoMet synthase family. In terms of assembly, homotetramer; dimer of dimers. Requires Mg(2+) as cofactor. It depends on K(+) as a cofactor.

It is found in the cytoplasm. It catalyses the reaction L-methionine + ATP + H2O = S-adenosyl-L-methionine + phosphate + diphosphate. It functions in the pathway amino-acid biosynthesis; S-adenosyl-L-methionine biosynthesis; S-adenosyl-L-methionine from L-methionine: step 1/1. Functionally, catalyzes the formation of S-adenosylmethionine (AdoMet) from methionine and ATP. The overall synthetic reaction is composed of two sequential steps, AdoMet formation and the subsequent tripolyphosphate hydrolysis which occurs prior to release of AdoMet from the enzyme. In Geobacter sp. (strain M21), this protein is S-adenosylmethionine synthase.